The following is a 186-amino-acid chain: Intraflagellar transport protein 27 homolog (186 aa).

Residues 12–19, 64–68, and 123–126 each bind GTP; these read GDPAVGKT, DSAGK, and NKTD.

This sequence belongs to the small GTPase superfamily. Rab family. Component of the IFT complex B, at least composed of IFT20, IFT25, IFT27, IFT52, IFT57, IFT74, IFT81, IFT88 and TRAF3IP1. Interacts with IFT25. Interacts with IFT70B. Interacts with RABL2/RABL2A; binding is equal in the presence of GTP or GDP. Interacts with ARL6; recognizes and binds with the GTP-free form of ARL6.

The protein localises to the cell projection. Its subcellular location is the cilium. The protein resides in the cytoplasm. It is found in the flagellum. Functionally, small GTPase-like component of the intraflagellar transport (IFT) complex B that promotes the exit of the BBSome complex from cilia via its interaction with ARL6. Not involved in entry of the BBSome complex into cilium. Prevents aggregation of GTP-free ARL6. Required for hedgehog signaling. Forms a subcomplex within the IFT complex B with IFT25. Its role in intraflagellar transport is mainly seen in tissues rich in ciliated cells such as kidney and testis. Essential for male fertility, spermiogenesis and sperm flagella formation. Plays a role in the early development of the kidney. May be involved in the regulation of ureteric bud initiation. This is Intraflagellar transport protein 27 homolog (IFT27) from Homo sapiens (Human).